Here is a 141-residue protein sequence, read N- to C-terminus: Hemoglobin subunit alpha-1/2 (141 aa).

In terms of domain architecture, Globin spans 1 to 141; sequence VLSPADKTNV…VSTVLTSKYR (141 aa). Ser-3 bears the Phosphoserine mark. Lys-7 carries the N6-succinyllysine modification. The residue at position 8 (Thr-8) is a Phosphothreonine. Position 11 is an N6-succinyllysine (Lys-11). Lys-16 is modified (N6-acetyllysine; alternate). Lys-16 is modified (N6-succinyllysine; alternate). The residue at position 24 (Tyr-24) is a Phosphotyrosine. Ser-35 bears the Phosphoserine mark. Lys-40 carries the post-translational modification N6-succinyllysine. Ser-49 is subject to Phosphoserine. O2 is bound at residue His-58. His-87 is a heme b binding site. Ser-102 bears the Phosphoserine mark. At Thr-108 the chain carries Phosphothreonine. 2 positions are modified to phosphoserine: Ser-124 and Ser-131. Phosphothreonine is present on residues Thr-134 and Thr-137. Ser-138 carries the phosphoserine modification.

This sequence belongs to the globin family. Heterotetramer of two alpha chains and two beta chains. As to expression, red blood cells.

Involved in oxygen transport from the lung to the various peripheral tissues. The polypeptide is Hemoglobin subunit alpha-1/2 (Macaca sinica (Toque macaque)).